We begin with the raw amino-acid sequence, 126 residues long: Aspartate 1-decarboxylase (126 aa).

The Schiff-base intermediate with substrate; via pyruvic acid role is filled by Ser25. Ser25 carries the pyruvic acid (Ser) modification. Position 57 (Thr57) interacts with substrate. Tyr58 (proton donor) is an active-site residue. A substrate-binding site is contributed by 73-75 (GAA).

It belongs to the PanD family. As to quaternary structure, heterooctamer of four alpha and four beta subunits. Pyruvate serves as cofactor. Is synthesized initially as an inactive proenzyme, which is activated by self-cleavage at a specific serine bond to produce a beta-subunit with a hydroxyl group at its C-terminus and an alpha-subunit with a pyruvoyl group at its N-terminus.

It is found in the cytoplasm. The catalysed reaction is L-aspartate + H(+) = beta-alanine + CO2. Its pathway is cofactor biosynthesis; (R)-pantothenate biosynthesis; beta-alanine from L-aspartate: step 1/1. Catalyzes the pyruvoyl-dependent decarboxylation of aspartate to produce beta-alanine. The protein is Aspartate 1-decarboxylase of Saccharophagus degradans (strain 2-40 / ATCC 43961 / DSM 17024).